The primary structure comprises 314 residues: MRPEGSLTYRVPERLRQGFCGVGRAAQALVCASAKEGTAFRMEAVQEGAAGVESEQAALGEEAVLLLDDIMAEVEVVAEVEVVAEEEGLVERREEAQRAQQAVPGPGPMTPESALEELLAVQVELEPVNAQARKAFSRQREKMERRRKPQLDRRGAVIQSVPGFWANVIANHPQMSALITDEDEDMLSYMVSLEVEEEKHPVHLCKIMLFFRSNPYFQNKVITKEYLVNITEYRASHSTPIEWYPDYEVEAYRRRHHNSSLNFFNWFSDHNFAGSNKIAEILCKDLWRNPLQYYKRMKPPEEGTETSGDSQLLS.

This sequence belongs to the nucleosome assembly protein (NAP) family.

The protein resides in the cytoplasm. It is found in the nucleus. May be involved in sperm differentiation and proliferation. This chain is Testis-specific Y-encoded protein 9, found in Homo sapiens (Human).